Consider the following 191-residue polypeptide: Imidazoleglycerol-phosphate dehydratase (191 aa).

The protein belongs to the imidazoleglycerol-phosphate dehydratase family.

The protein localises to the cytoplasm. It catalyses the reaction D-erythro-1-(imidazol-4-yl)glycerol 3-phosphate = 3-(imidazol-4-yl)-2-oxopropyl phosphate + H2O. It functions in the pathway amino-acid biosynthesis; L-histidine biosynthesis; L-histidine from 5-phospho-alpha-D-ribose 1-diphosphate: step 6/9. The protein is Imidazoleglycerol-phosphate dehydratase of Methanosarcina barkeri (strain Fusaro / DSM 804).